The primary structure comprises 277 residues: Putative pyruvate, phosphate dikinase regulatory protein (277 aa).

151-158 (GISRTSKT) is a binding site for ADP.

The protein belongs to the pyruvate, phosphate/water dikinase regulatory protein family. PDRP subfamily.

The catalysed reaction is N(tele)-phospho-L-histidyl/L-threonyl-[pyruvate, phosphate dikinase] + ADP = N(tele)-phospho-L-histidyl/O-phospho-L-threonyl-[pyruvate, phosphate dikinase] + AMP + H(+). It carries out the reaction N(tele)-phospho-L-histidyl/O-phospho-L-threonyl-[pyruvate, phosphate dikinase] + phosphate + H(+) = N(tele)-phospho-L-histidyl/L-threonyl-[pyruvate, phosphate dikinase] + diphosphate. In terms of biological role, bifunctional serine/threonine kinase and phosphorylase involved in the regulation of the pyruvate, phosphate dikinase (PPDK) by catalyzing its phosphorylation/dephosphorylation. The chain is Putative pyruvate, phosphate dikinase regulatory protein from Alkaliphilus oremlandii (strain OhILAs) (Clostridium oremlandii (strain OhILAs)).